Consider the following 217-residue polypeptide: MSIGLIGRKCGMTRIFTETGSSIPVTVVEVIPNRITQVKTVETDGYRAFQVAYGKKSSARVNKPLAGHYSKAAVEAGNALREFRLGNEELTEAKAGDELKVDIFKEGQVVDVRGLTRGKGFAGTVKHHNFRTQDATHGNSLSHRAPGSIGQCQTPGRVWKGKKMAGQLGNVYCTVQSQEIIKVDVERNLLLIKGALPGAPGGEVIITQSSKKRKEDK.

Residues 134 to 154 are disordered; the sequence is DATHGNSLSHRAPGSIGQCQT. Gln153 bears the N5-methylglutamine mark.

Belongs to the universal ribosomal protein uL3 family. As to quaternary structure, part of the 50S ribosomal subunit. Forms a cluster with proteins L14 and L19. In terms of processing, methylated by PrmB.

Its function is as follows. One of the primary rRNA binding proteins, it binds directly near the 3'-end of the 23S rRNA, where it nucleates assembly of the 50S subunit. The sequence is that of Large ribosomal subunit protein uL3 from Coxiella burnetii (strain Dugway 5J108-111).